We begin with the raw amino-acid sequence, 276 residues long: Putative pyridoxine kinase (276 aa).

ATP is bound at residue N139. A Mg(2+)-binding site is contributed by E142. ATP is bound by residues 176–180, D188, G213, and K238; that span reads KGGKA.

It belongs to the ThiD family.

The enzyme catalyses pyridoxal + ATP = pyridoxal 5'-phosphate + ADP + H(+). In terms of biological role, phosphorylates B6 vitamers; functions in a salvage pathway. Uses pyridoxal, pyridoxine, and pyridoxamine as substrates. The protein is Putative pyridoxine kinase (pdxK) of Staphylococcus aureus (strain COL).